The primary structure comprises 360 residues: Protein Wnt-2 (360 aa).

The first 25 residues, 1–25, serve as a signal peptide directing secretion; it reads MNAPLGGIWLWLPLLLTWLTPEVSS. Cystine bridges form between C76–C87, C127–C135, C137–C157, C206–C220, C208–C215, C278–C309, C294–C304, C308–C348, C324–C339, C326–C336, and C331–C332. Residue S212 is the site of O-palmitoleoyl serine; by PORCN attachment. N295 carries an N-linked (GlcNAc...) asparagine glycan.

It belongs to the Wnt family. Post-translationally, palmitoleoylation is required for efficient binding to frizzled receptors. Depalmitoleoylation leads to Wnt signaling pathway inhibition.

The protein resides in the secreted. The protein localises to the extracellular space. It localises to the extracellular matrix. Functionally, ligand for members of the frizzled family of seven transmembrane receptors. Functions in the canonical Wnt signaling pathway that results in activation of transcription factors of the TCF/LEF family. Functions as a upstream regulator of FGF10 expression. Plays an important role in embryonic lung development. May contribute to embryonic brain development by regulating the proliferation of dopaminergic precursors and neurons. The chain is Protein Wnt-2 (WNT2) from Equus caballus (Horse).